A 65-amino-acid chain; its full sequence is Hainantoxin-X-3 (65 aa).

A signal peptide spans 1-20 (MNMKILVLVAVLCLVVSTHA). A propeptide spanning residues 21 to 37 (ERHSKTDMEDSPMIQER) is cleaved from the precursor. 2 cysteine pairs are disulfide-bonded: C46-C59 and C55-C64.

It belongs to the neurotoxin 36 family. 02 subfamily. As to expression, expressed by the venom gland.

It localises to the secreted. Functionally, reversibly blocks N-type calcium channels (Cav2.2/CACNA1B) in rat dorsal root ganglion cells. Elicits no toxic symptoms in either vertebrates or invertebrates during a period of 48 hours post-injection, when it was assayed in vivo by direct injection into mice and cockroaches. This is Hainantoxin-X-3 from Cyriopagopus hainanus (Chinese bird spider).